Consider the following 281-residue polypeptide: Src-like-adapter (281 aa).

The disordered stretch occupies residues 1 to 20 (MGNSMKSTSPPSERPLSSSE). Glycine 2 carries the N-myristoyl glycine lipid modification. Low complexity predominate over residues 7–20 (STSPPSERPLSSSE). In terms of domain architecture, SH3 spans 22–82 (LESDFLAVLT…PGICVARVYH (61 aa)). The 92-residue stretch at 84-175 (WLFEGLGRDK…GLCCVLTTPC (92 aa)) folds into the SH2 domain. The tract at residues 190 to 281 (CTSPGSPVTL…FFSAPQYFED (92 aa)) is SLA C-terminal. Position 258 is a phosphoserine (serine 258). Tyrosine 278 is subject to Phosphotyrosine.

As to quaternary structure, homodimer. Interacts with phosphorylated CBL, SYK and LAT. Homodimerization and interaction with phosphorylated CBL occurs via its C-terminal domain. Interacts with PDGFRB and EPHA2. Interacts with phosphorylated proteins ZAP70; CD3Z; VAV1 and LCP2 via its SH2 domain. In terms of tissue distribution, predominantly expressed in lymphoid tissues. Highly expressed in spleen, thymus and lymph nodes. Weakly expressed in lung and brain. Expressed in T-cells and at low level in B-cells.

The protein localises to the cytoplasm. It localises to the endosome. Adapter protein, which negatively regulates T-cell receptor (TCR) signaling. Inhibits T-cell antigen-receptor induced activation of nuclear factor of activated T-cells. Involved in the negative regulation of positive selection and mitosis of T-cells. May act by linking signaling proteins such as ZAP70 with CBL, leading to a CBL dependent degradation of signaling proteins. The sequence is that of Src-like-adapter (Sla) from Mus musculus (Mouse).